A 394-amino-acid chain; its full sequence is Bifunctional enzyme IspD/IspF (394 aa).

The tract at residues 1–230 is 2-C-methyl-D-erythritol 4-phosphate cytidylyltransferase; it reads MADTLAIVVA…AEALLGGGPV (230 aa). The interval 231-394 is 2-C-methyl-D-erythritol 2,4-cyclodiphosphate synthase; the sequence is LVGFGYDVHR…RIVLPGDRVL (164 aa). A divalent metal cation is bound by residues aspartate 237 and histidine 239. 4-CDP-2-C-methyl-D-erythritol 2-phosphate is bound by residues 237 to 239 and 263 to 264; these read DVH and HS. Residue histidine 271 coordinates a divalent metal cation. 4-CDP-2-C-methyl-D-erythritol 2-phosphate contacts are provided by residues 285–287, 290–294, 361–364, and phenylalanine 368; these read DIG, FPDDD, and TTTE.

In the N-terminal section; belongs to the IspD/TarI cytidylyltransferase family. IspD subfamily. The protein in the C-terminal section; belongs to the IspF family. The cofactor is a divalent metal cation.

It catalyses the reaction 2-C-methyl-D-erythritol 4-phosphate + CTP + H(+) = 4-CDP-2-C-methyl-D-erythritol + diphosphate. The catalysed reaction is 4-CDP-2-C-methyl-D-erythritol 2-phosphate = 2-C-methyl-D-erythritol 2,4-cyclic diphosphate + CMP. Its pathway is isoprenoid biosynthesis; isopentenyl diphosphate biosynthesis via DXP pathway; isopentenyl diphosphate from 1-deoxy-D-xylulose 5-phosphate: step 2/6. It functions in the pathway isoprenoid biosynthesis; isopentenyl diphosphate biosynthesis via DXP pathway; isopentenyl diphosphate from 1-deoxy-D-xylulose 5-phosphate: step 4/6. In terms of biological role, bifunctional enzyme that catalyzes the formation of 4-diphosphocytidyl-2-C-methyl-D-erythritol from CTP and 2-C-methyl-D-erythritol 4-phosphate (MEP) (IspD), and catalyzes the conversion of 4-diphosphocytidyl-2-C-methyl-D-erythritol 2-phosphate (CDP-ME2P) to 2-C-methyl-D-erythritol 2,4-cyclodiphosphate (ME-CPP) with a corresponding release of cytidine 5-monophosphate (CMP) (IspF). In Desulforudis audaxviator (strain MP104C), this protein is Bifunctional enzyme IspD/IspF.